Reading from the N-terminus, the 475-residue chain is Enolase (475 aa).

Position 179 (Q179) interacts with (2R)-2-phosphoglycerate. E221 functions as the Proton donor in the catalytic mechanism. D258, E312, and D339 together coordinate Mg(2+). 4 residues coordinate (2R)-2-phosphoglycerate: K364, R393, S394, and K415. Residue K364 is the Proton acceptor of the active site. Residues 454 to 475 form a disordered region; sequence STPAATPKKSPAKKTTKAKSKK. Residues 463-475 show a composition bias toward basic residues; the sequence is SPAKKTTKAKSKK.

This sequence belongs to the enolase family. It depends on Mg(2+) as a cofactor.

It is found in the cell membrane. The protein localises to the cytoplasm. The protein resides in the secreted. It localises to the cell surface. It catalyses the reaction (2R)-2-phosphoglycerate = phosphoenolpyruvate + H2O. Its pathway is carbohydrate degradation; glycolysis; pyruvate from D-glyceraldehyde 3-phosphate: step 4/5. Its function is as follows. Catalyzes the reversible conversion of 2-phosphoglycerate (2-PG) into phosphoenolpyruvate (PEP). It is essential for the degradation of carbohydrates via glycolysis. In terms of biological role, 'Moonlights' as a plasminogen receptor. Binds host (chicken) plasminogen; enolase antiserum inhibits M.gallisepticum adherence to chicken embryo fibroblasts. This is Enolase from Mycoplasmoides gallisepticum (strain R(low / passage 15 / clone 2)) (Mycoplasma gallisepticum).